Consider the following 590-residue polypeptide: (-)-alpha-terpineol synthase (590 aa).

5 residues coordinate Mg(2+): aspartate 339, aspartate 343, aspartate 483, threonine 487, and glutamate 491. Positions 339–343 (DDVYD) match the DDXXD motif motif.

Belongs to the terpene synthase family. Mg(2+) serves as cofactor.

The enzyme catalyses (2E)-geranyl diphosphate + H2O = (S)-alpha-terpineol + diphosphate. Its pathway is secondary metabolite biosynthesis; terpenoid biosynthesis. In terms of biological role, mediates the conversion of geranyl diphosphate into alpha-terpineol, a monoterpenol. Monoterpenols contribute to the final grape and wine aroma and flavor. Also forms some 1,8-cineole and traces of other monoterpenoids. This is (-)-alpha-terpineol synthase from Vitis vinifera (Grape).